The chain runs to 30 residues: Acyl-CoA-binding protein 1 (30 aa).

Residues 1–15 (ALKDEFEEHAEKAKT) show a composition bias toward basic and acidic residues. Residues 1-30 (ALKDEFEEHAEKAKTLPENTSNENKLILYG) form a disordered region. An ACB domain is found at 2–30 (LKDEFEEHAEKAKTLPENTSNENKLILYG).

The protein belongs to the ACBP family.

The protein localises to the cytoplasm. Its function is as follows. Binds medium- and long-chain acyl-CoA esters with very high affinity and may function as an intracellular carrier of acyl-CoA esters. This Digitalis lanata (Grecian foxglove) protein is Acyl-CoA-binding protein 1.